A 728-amino-acid polypeptide reads, in one-letter code: Microtubule-associated protein VP5 (728 aa).

The protein belongs to the reoviridae microtubule-associated protein family.

Its subcellular location is the virion. It is found in the host cytoplasm. The protein resides in the host cytoskeleton. In terms of biological role, minor inner capsid component. Displays NTPase and RNA 5'-triphosphatase (RTPase) activities. May function as a cofactor of polymerase. Associates with microtubules and plays a role in the formation, structural organization and morphology of viral inclusions, where the assembly of cores and the replication of viral RNA occur. The sequence is that of Microtubule-associated protein VP5 (S5) from Ctenopharyngodon idella (Grass carp).